A 350-amino-acid polypeptide reads, in one-letter code: Protein TRIGALACTOSYLDIACYLGLYCEROL 1, chloroplastic (350 aa).

The tract at residues Ser-67–Ala-86 is disordered. The helical transmembrane segment at Tyr-98–Leu-117 threads the bilayer. Topologically, residues Lys-118–Lys-136 are stromal. A helical membrane pass occupies residues Ser-137–Val-157. The Chloroplast intermembrane segment spans residues Arg-158 to Ser-168. The helical transmembrane segment at Ile-169 to Val-189 threads the bilayer. The Stromal segment spans residues Val-190 to Arg-229. The chain crosses the membrane as a helical span at residues Val-230–Ala-250. Residues Ser-251 to Gln-288 are Chloroplast intermembrane-facing. The chain crosses the membrane as a helical span at residues Val-289–Ala-309. The Stromal portion of the chain corresponds to Lys-310 to Ser-318. The chain crosses the membrane as a helical span at residues Ala-319–Phe-339. Residues Gln-340–Val-350 are Chloroplast intermembrane-facing.

This sequence belongs to the MlaE permease family. Permease subunit of the TGD complex, a lipid translocator at the inner chloroplast envelope membrane made of TGD1, TGD2 and TGD3. Interacts with TGD2 and TGD3 with an overall subunit stoichiometry of 2 TGD1, 2 TGD3 and 8 to 12 TGD2. Interacts with TGD5. As to expression, high levels in green tissues, but low levels in nongreen tissues such as roots.

The protein resides in the plastid. The protein localises to the chloroplast inner membrane. In terms of biological role, required during embryogenesis. Permease involved in lipid transfer from the endoplasmic reticulum (ER) to plastids, and necessary for thylakoids formation. This Arabidopsis thaliana (Mouse-ear cress) protein is Protein TRIGALACTOSYLDIACYLGLYCEROL 1, chloroplastic.